A 279-amino-acid polypeptide reads, in one-letter code: 3-methyl-2-oxobutanoate hydroxymethyltransferase (279 aa).

2 residues coordinate Mg(2+): aspartate 44 and aspartate 83. Residues 44-45, aspartate 83, and lysine 112 each bind 3-methyl-2-oxobutanoate; that span reads DS. Mg(2+) is bound at residue glutamate 114. The Proton acceptor role is filled by glutamate 181.

The protein belongs to the PanB family. Homodecamer; pentamer of dimers. The cofactor is Mg(2+).

The protein resides in the cytoplasm. The catalysed reaction is 3-methyl-2-oxobutanoate + (6R)-5,10-methylene-5,6,7,8-tetrahydrofolate + H2O = 2-dehydropantoate + (6S)-5,6,7,8-tetrahydrofolate. The protein operates within cofactor biosynthesis; coenzyme A biosynthesis. Functionally, catalyzes the reversible reaction in which hydroxymethyl group from 5,10-methylenetetrahydrofolate is transferred onto alpha-ketoisovalerate to form ketopantoate. This Nitrosopumilus maritimus (strain SCM1) protein is 3-methyl-2-oxobutanoate hydroxymethyltransferase.